We begin with the raw amino-acid sequence, 387 residues long: MSEDFYDVLGVSRNADGDDIKQAYRKKAAKYHPDVSDDPNAEEKFKKIKKAKEVLTDGEKRQMYDQLGHDRFQQAEKRGGVGGGGNSSGGSARGDPFGGMGGQGSPFGDIFEQFFGGGQGQRRQGNRPRQGQNLQTRVQLDLEEVYTGVEKQFTVRRPEKCPDCNGRGHPSDADVRTCPQCNGQGQTTTVRETALGRVQQTQTCPRCDGSGEMYTQTCSTCNGDGVTRQEATLSVDIPAGIRDGQTLRMEREGAPGDNGGPRGDLLIDVSVRDHPDFERDGDDLYYRLAISFPQAVFGSTVEVPTVNGETTLDISAGTQSGEEFRIRNEGIPHLRGRGTGDLYVQVQIVTPENLSQKQREALEAFAEAGGESVDVSQGFFEKIKSSF.

Positions 4-68 constitute a J domain; it reads DFYDVLGVSR…EKRQMYDQLG (65 aa). The disordered stretch occupies residues 76-135; it reads EKRGGVGGGGNSSGGSARGDPFGGMGGQGSPFGDIFEQFFGGGQGQRRQGNRPRQGQNLQ. Residues 80 to 105 show a composition bias toward gly residues; it reads GVGGGGNSSGGSARGDPFGGMGGQGS. Positions 121–133 are enriched in low complexity; that stretch reads QRRQGNRPRQGQN. The segment at 148–230 adopts a CR-type zinc-finger fold; sequence GVEKQFTVRR…CNGDGVTRQE (83 aa). The Zn(2+) site is built by C161, C164, C178, C181, C204, C207, C218, and C221. CXXCXGXG motif repeat units lie at residues 161–168, 178–185, 204–211, and 218–225; these read CPDCNGRG, CPQCNGQG, CPRCDGSG, and CSTCNGDG.

This sequence belongs to the DnaJ family. In terms of assembly, homodimer. Zn(2+) is required as a cofactor.

It is found in the cytoplasm. Functionally, participates actively in the response to hyperosmotic and heat shock by preventing the aggregation of stress-denatured proteins and by disaggregating proteins, also in an autonomous, DnaK-independent fashion. Unfolded proteins bind initially to DnaJ; upon interaction with the DnaJ-bound protein, DnaK hydrolyzes its bound ATP, resulting in the formation of a stable complex. GrpE releases ADP from DnaK; ATP binding to DnaK triggers the release of the substrate protein, thus completing the reaction cycle. Several rounds of ATP-dependent interactions between DnaJ, DnaK and GrpE are required for fully efficient folding. Also involved, together with DnaK and GrpE, in the DNA replication of plasmids through activation of initiation proteins. The sequence is that of Chaperone protein DnaJ from Haloquadratum walsbyi (strain DSM 16790 / HBSQ001).